A 200-amino-acid polypeptide reads, in one-letter code: 3-isopropylmalate dehydratase small subunit (200 aa).

The protein belongs to the LeuD family. LeuD type 1 subfamily. In terms of assembly, heterodimer of LeuC and LeuD.

The enzyme catalyses (2R,3S)-3-isopropylmalate = (2S)-2-isopropylmalate. The protein operates within amino-acid biosynthesis; L-leucine biosynthesis; L-leucine from 3-methyl-2-oxobutanoate: step 2/4. Functionally, catalyzes the isomerization between 2-isopropylmalate and 3-isopropylmalate, via the formation of 2-isopropylmaleate. The sequence is that of 3-isopropylmalate dehydratase small subunit from Sodalis glossinidius (strain morsitans).